Consider the following 222-residue polypeptide: DNA-directed RNA polymerase V subunit 5A (222 aa).

It belongs to the archaeal Rpo5/eukaryotic RPB5 RNA polymerase subunit family. As to quaternary structure, component of the RNA polymerase V complex. As to expression, expressed in roots, leaves, siliques and seeds, and to a lower level, in flower buds and flowers.

It is found in the nucleus. Functionally, DNA-dependent RNA polymerase catalyzes the transcription of DNA into RNA using the four ribonucleoside triphosphates as substrates. Component of RNA polymerase V involved in RNA-directed DNA methylation-dependent (RdDM) silencing of endogenous repeated sequences, including transposable elements. Required for establishment of DNA methylation. The polypeptide is DNA-directed RNA polymerase V subunit 5A (NRPE5A) (Arabidopsis thaliana (Mouse-ear cress)).